Here is a 293-residue protein sequence, read N- to C-terminus: MDQECIENYAKVNGIYIYYKLCKAPEEKAKLMTMHGGPGMSHDYLLSLRDMTKEGITVLFYDQFGCGRSEEPDQSKFTIDYGVEEAEALRSKLFGNEKVFLMGSSYGGALALAYAVKYQDHLKGLIVSGGLSSVPLTVKEMNRLIDELPAKYRDAIKKYGSSGSYENPEYQEAVNYFYHQHLLRSEDWPPEVLKSLEYAERRNVYRIMNGPNEFTITGTIKDWDITDKISAIKIPTLITVGEYDEVTPNVARVIHEKIAGSELHVFRDCSHLTMWEDREGYNKLLSDFILKHL.

Ser-105 functions as the Nucleophile in the catalytic mechanism. Residue Asp-244 is part of the active site. His-271 (proton donor) is an active-site residue.

It belongs to the peptidase S33 family. As to quaternary structure, part of the tricorn proteolytic complex.

The enzyme catalyses Release of N-terminal proline from a peptide.. Functionally, cleaves H-Pro-AMC as well as a wide spectrum of amino acid substrates and several peptide substrates without a proline at the N-terminus. Proteases F1, F2 and F3 degrade oligopeptides produced by Tricorn (themselves probably produced by the proteasome) yielding free amino acids. The protein is Proline iminopeptidase (pip) of Thermoplasma acidophilum (strain ATCC 25905 / DSM 1728 / JCM 9062 / NBRC 15155 / AMRC-C165).